Here is a 435-residue protein sequence, read N- to C-terminus: Amino acid transporter AVT6C (435 aa).

The segment at 1 to 24 (MTPQIKTHLLPKQEPSSSENHGSS) is disordered. Transmembrane regions (helical) follow at residues 28–48 (IVFN…PAAF), 53–73 (IVPA…SVGF), 100–120 (IAVQ…FSII), 148–168 (WNTR…PLVL), 181–201 (VSFL…ISAL), 219–239 (GSFW…TFHF), 260–280 (ISVI…YLLF), 307–327 (IVRL…NFSL), 354–374 (LALL…WYFF), 375–395 (QFMG…AIVL), and 408–428 (IVAA…ISTN).

It belongs to the amino acid/polyamine transporter 2 family. Amino acid/auxin permease (AAAP) (TC 2.A.18.6) subfamily.

The protein localises to the membrane. In Arabidopsis thaliana (Mouse-ear cress), this protein is Amino acid transporter AVT6C.